We begin with the raw amino-acid sequence, 93 residues long: Pyrimidine/purine nucleoside phosphorylase (93 aa).

Belongs to the nucleoside phosphorylase PpnP family.

It catalyses the reaction a purine D-ribonucleoside + phosphate = a purine nucleobase + alpha-D-ribose 1-phosphate. The catalysed reaction is adenosine + phosphate = alpha-D-ribose 1-phosphate + adenine. The enzyme catalyses cytidine + phosphate = cytosine + alpha-D-ribose 1-phosphate. It carries out the reaction guanosine + phosphate = alpha-D-ribose 1-phosphate + guanine. It catalyses the reaction inosine + phosphate = alpha-D-ribose 1-phosphate + hypoxanthine. The catalysed reaction is thymidine + phosphate = 2-deoxy-alpha-D-ribose 1-phosphate + thymine. The enzyme catalyses uridine + phosphate = alpha-D-ribose 1-phosphate + uracil. It carries out the reaction xanthosine + phosphate = alpha-D-ribose 1-phosphate + xanthine. Its function is as follows. Catalyzes the phosphorolysis of diverse nucleosides, yielding D-ribose 1-phosphate and the respective free bases. Can use uridine, adenosine, guanosine, cytidine, thymidine, inosine and xanthosine as substrates. Also catalyzes the reverse reactions. This chain is Pyrimidine/purine nucleoside phosphorylase, found in Pseudomonas syringae pv. syringae (strain B728a).